The primary structure comprises 383 residues: tRNA-specific 2-thiouridylase MnmA (383 aa).

Residues 9 to 16 and M35 contribute to the ATP site; that span reads GMSGGVDS. The tract at residues 95 to 97 is interaction with target base in tRNA; it reads NPD. C100 serves as the catalytic Nucleophile. A disulfide bridge connects residues C100 and C196. An ATP-binding site is contributed by G124. The tract at residues 146-148 is interaction with tRNA; sequence KDQ. C196 acts as the Cysteine persulfide intermediate in catalysis. Positions 308–309 are interaction with tRNA; it reads RY.

The protein belongs to the MnmA/TRMU family.

The protein resides in the cytoplasm. It catalyses the reaction S-sulfanyl-L-cysteinyl-[protein] + uridine(34) in tRNA + AH2 + ATP = 2-thiouridine(34) in tRNA + L-cysteinyl-[protein] + A + AMP + diphosphate + H(+). In terms of biological role, catalyzes the 2-thiolation of uridine at the wobble position (U34) of tRNA, leading to the formation of s(2)U34. This is tRNA-specific 2-thiouridylase MnmA from Burkholderia pseudomallei (strain 1106a).